Reading from the N-terminus, the 482-residue chain is Glycogen synthase (482 aa).

Lys-20 serves as a coordination point for ADP-alpha-D-glucose.

Belongs to the glycosyltransferase 1 family. Bacterial/plant glycogen synthase subfamily.

It catalyses the reaction [(1-&gt;4)-alpha-D-glucosyl](n) + ADP-alpha-D-glucose = [(1-&gt;4)-alpha-D-glucosyl](n+1) + ADP + H(+). It participates in glycan biosynthesis; glycogen biosynthesis. In terms of biological role, synthesizes alpha-1,4-glucan chains using ADP-glucose. The sequence is that of Glycogen synthase from Aliivibrio salmonicida (strain LFI1238) (Vibrio salmonicida (strain LFI1238)).